Here is a 476-residue protein sequence, read N- to C-terminus: ENTH domain-containing protein C794.11c (476 aa).

Residues 30–154 (YTSMEARVRE…VELLNDSERI (125 aa)) form the ENTH domain. Disordered stretches follow at residues 157-198 (ERKR…GSYR), 213-308 (NGYH…GFGD), 410-429 (QAGL…SGSN), and 444-472 (VHQE…LDND). Ser-173 carries the post-translational modification Phosphoserine. Low complexity-rich tracts occupy residues 178–198 (RIST…GSYR) and 213–222 (NGYHDSSSMS). Ser-228 carries the phosphoserine modification. Acidic residues predominate over residues 229-240 (DNDVEEYNEDGD). Tyr-235 is modified (phosphotyrosine). 2 positions are modified to phosphoserine: Ser-243 and Ser-244. A compositionally biased stretch (basic and acidic residues) spans 262-271 (QSDKAPEQPK). The span at 444–454 (VHQENSTRERV) shows a compositional bias: basic and acidic residues. The residue at position 459 (Ser-459) is a Phosphoserine.

The sequence is that of ENTH domain-containing protein C794.11c from Schizosaccharomyces pombe (strain 972 / ATCC 24843) (Fission yeast).